A 138-amino-acid polypeptide reads, in one-letter code: Basic phospholipase A2 beta-bungarotoxin A-AL3 chain (138 aa).

A signal peptide spans 1 to 10 (LAVCVSLIGA). The propeptide occupies 11–18 (ANIPPQHL). 6 disulfides stabilise this stretch: Cys-45–Cys-137, Cys-47–Cys-63, Cys-62–Cys-118, Cys-69–Cys-111, Cys-79–Cys-104, and Cys-97–Cys-109. Ca(2+) contacts are provided by Tyr-46, Gly-48, and Gly-50. Residue His-66 is part of the active site. Ca(2+) is bound at residue Asp-67. Residue Asp-112 is part of the active site.

Belongs to the phospholipase A2 family. Group I subfamily. D49 sub-subfamily. As to quaternary structure, heterodimer; disulfide-linked. The A chains have phospholipase A2 activity and the B chains show homology with the basic protease inhibitors. Ca(2+) is required as a cofactor. As to expression, expressed by the venom gland.

It is found in the secreted. It carries out the reaction a 1,2-diacyl-sn-glycero-3-phosphocholine + H2O = a 1-acyl-sn-glycero-3-phosphocholine + a fatty acid + H(+). In terms of biological role, snake venom phospholipase A2 (PLA2) that inhibits neuromuscular transmission by blocking acetylcholine release from the nerve termini. PLA2 catalyzes the calcium-dependent hydrolysis of the 2-acyl groups in 3-sn-phosphoglycerides. The sequence is that of Basic phospholipase A2 beta-bungarotoxin A-AL3 chain from Bungarus multicinctus (Many-banded krait).